The following is a 354-amino-acid chain: Probable RNA methyltransferase AZOSEA28700 (354 aa).

Catalysis depends on E88, which acts as the Proton acceptor. A Radical SAM core domain is found at 91–317 (LLPRDGLCVS…TKLRHSAGQD (227 aa)). Cysteines 98 and 322 form a disulfide. C105, C109, and C112 together coordinate [4Fe-4S] cluster. S-adenosyl-L-methionine-binding positions include 150-151 (GE), S180, 203-205 (SLH), and N279. The active-site S-methylcysteine intermediate is C322.

It belongs to the radical SAM superfamily. RlmN family. [4Fe-4S] cluster serves as cofactor.

It localises to the cytoplasm. The chain is Probable RNA methyltransferase AZOSEA28700 from Aromatoleum aromaticum (strain DSM 19018 / LMG 30748 / EbN1) (Azoarcus sp. (strain EbN1)).